The sequence spans 265 residues: Small ribosomal subunit protein uS2 (265 aa).

The tract at residues 226-265 (AAAPNSASVREEEFSAESADEGKGRRAPAKKGDKKADAAE) is disordered. A compositionally biased stretch (basic and acidic residues) spans 245–265 (DEGKGRRAPAKKGDKKADAAE).

It belongs to the universal ribosomal protein uS2 family.

In Xanthomonas euvesicatoria pv. vesicatoria (strain 85-10) (Xanthomonas campestris pv. vesicatoria), this protein is Small ribosomal subunit protein uS2.